We begin with the raw amino-acid sequence, 114 residues long: Ribonuclease P protein component (114 aa).

The protein belongs to the RnpA family. In terms of assembly, consists of a catalytic RNA component (M1 or rnpB) and a protein subunit.

The enzyme catalyses Endonucleolytic cleavage of RNA, removing 5'-extranucleotides from tRNA precursor.. Functionally, RNaseP catalyzes the removal of the 5'-leader sequence from pre-tRNA to produce the mature 5'-terminus. It can also cleave other RNA substrates such as 4.5S RNA. The protein component plays an auxiliary but essential role in vivo by binding to the 5'-leader sequence and broadening the substrate specificity of the ribozyme. In Borrelia duttonii (strain Ly), this protein is Ribonuclease P protein component.